A 334-amino-acid polypeptide reads, in one-letter code: Beta-hexosaminidase (334 aa).

Substrate-binding positions include Asp-60, Arg-68, Arg-133, and Lys-163–His-164. Catalysis depends on His-176, which acts as the Proton donor/acceptor. The Nucleophile role is filled by Asp-247.

This sequence belongs to the glycosyl hydrolase 3 family. NagZ subfamily.

Its subcellular location is the cytoplasm. It carries out the reaction Hydrolysis of terminal non-reducing N-acetyl-D-hexosamine residues in N-acetyl-beta-D-hexosaminides.. The protein operates within cell wall biogenesis; peptidoglycan recycling. In terms of biological role, plays a role in peptidoglycan recycling by cleaving the terminal beta-1,4-linked N-acetylglucosamine (GlcNAc) from peptide-linked peptidoglycan fragments, giving rise to free GlcNAc, anhydro-N-acetylmuramic acid and anhydro-N-acetylmuramic acid-linked peptides. This is Beta-hexosaminidase from Xanthomonas oryzae pv. oryzae (strain KACC10331 / KXO85).